The following is a 313-amino-acid chain: Recombination-promoting nuclease pSLT051 (313 aa).

It belongs to the Rpn/YhgA-like nuclease family.

Its function is as follows. A low activity DNA endonuclease probably yielding 3'-hydroxyl ends. Involved in RecA-independent recombination and horizontal gene transfer. The polypeptide is Recombination-promoting nuclease pSLT051 (Salmonella typhimurium (strain LT2 / SGSC1412 / ATCC 700720)).